We begin with the raw amino-acid sequence, 209 residues long: Glutathione S-transferase 1, isoform D (209 aa).

Residues 1–80 form the GST N-terminal domain; it reads MDFYYLPGSA…YLAEKYGKDD (80 aa). Glutathione is bound by residues Ser-9, 50-52, and 64-66; these read HCI and ESR. In terms of domain architecture, GST C-terminal spans 86-207; that stretch reads DPQKRAVVNQ…AGADEFKAKF (122 aa).

Belongs to the GST superfamily. Theta family. Homodimer.

The catalysed reaction is RX + glutathione = an S-substituted glutathione + a halide anion + H(+). It carries out the reaction 1,1,1-trichloro-2,2-bis(4-chlorophenyl)ethane = 1,1-dichloro-2,2-bis(4-chlorophenyl)ethylene + chloride + H(+). Inhibited by S-hexylglutathione. In terms of biological role, conjugation of reduced glutathione to a wide number of exogenous and endogenous hydrophobic electrophiles. Has DDT dehydrochlorinase activity. This chain is Glutathione S-transferase 1, isoform D (GstD1), found in Anopheles gambiae (African malaria mosquito).